The chain runs to 184 residues: Large ribosomal subunit protein eL18 (184 aa).

This sequence belongs to the eukaryotic ribosomal protein eL18 family.

It is found in the cytoplasm. In Theileria parva (East coast fever infection agent), this protein is Large ribosomal subunit protein eL18 (RPL18).